A 152-amino-acid polypeptide reads, in one-letter code: Xanthine-guanine phosphoribosyltransferase (152 aa).

Residues 37-38, R69, and 88-96 contribute to the 5-phospho-alpha-D-ribose 1-diphosphate site; these read RG and DDLVDTGGT. GMP is bound at residue R69. D89 lines the Mg(2+) pocket. Positions 92 and 135 each coordinate guanine. Residues D92 and I135 each coordinate xanthine. Residues 92-96 and 134-135 each bind GMP; these read DTGGT and WI.

This sequence belongs to the purine/pyrimidine phosphoribosyltransferase family. XGPT subfamily. Homotetramer. It depends on Mg(2+) as a cofactor.

Its subcellular location is the cell inner membrane. It carries out the reaction GMP + diphosphate = guanine + 5-phospho-alpha-D-ribose 1-diphosphate. It catalyses the reaction XMP + diphosphate = xanthine + 5-phospho-alpha-D-ribose 1-diphosphate. The enzyme catalyses IMP + diphosphate = hypoxanthine + 5-phospho-alpha-D-ribose 1-diphosphate. The protein operates within purine metabolism; GMP biosynthesis via salvage pathway; GMP from guanine: step 1/1. Its pathway is purine metabolism; XMP biosynthesis via salvage pathway; XMP from xanthine: step 1/1. Functionally, purine salvage pathway enzyme that catalyzes the transfer of the ribosyl-5-phosphate group from 5-phospho-alpha-D-ribose 1-diphosphate (PRPP) to the N9 position of the 6-oxopurines guanine and xanthine to form the corresponding ribonucleotides GMP (guanosine 5'-monophosphate) and XMP (xanthosine 5'-monophosphate), with the release of PPi. To a lesser extent, also acts on hypoxanthine. This chain is Xanthine-guanine phosphoribosyltransferase, found in Escherichia coli (strain UTI89 / UPEC).